The following is a 174-amino-acid chain: FMN reductase (NADH) SmoA (174 aa).

The protein belongs to the non-flavoprotein flavin reductase family.

The catalysed reaction is FMNH2 + NAD(+) = FMN + NADH + 2 H(+). Functionally, part of the sulfoquinovose monooxygenase (sulfo-SMO) pathway, a D-sulfoquinovose degradation pathway that enables the complete utilization of all carbons within sulfoquinovose (SQ) with concomitant production of inorganic sulfite. Catalyzes the NADH-dependent reduction of FMN. FMNH(2) is then transferred to the sulfoquinovose monooxygenase SmoC. The sequence is that of FMN reductase (NADH) SmoA from Agrobacterium fabrum (strain C58 / ATCC 33970) (Agrobacterium tumefaciens (strain C58)).